Reading from the N-terminus, the 150-residue chain is Transcription antitermination protein NusB (150 aa).

The protein belongs to the NusB family.

In terms of biological role, involved in transcription antitermination. Required for transcription of ribosomal RNA (rRNA) genes. Binds specifically to the boxA antiterminator sequence of the ribosomal RNA (rrn) operons. The polypeptide is Transcription antitermination protein NusB (Streptococcus equi subsp. zooepidemicus (strain H70)).